The primary structure comprises 552 residues: Probable protein kinase UbiB (552 aa).

Residues His121–Ala504 form the Protein kinase domain. Residues Leu127 to Val135 and Lys149 each bind ATP. Asp284 acts as the Proton acceptor in catalysis. 2 helical membrane-spanning segments follow: residues Val501–His521 and Tyr526–Phe546.

It belongs to the ABC1 family. UbiB subfamily.

The protein localises to the cell inner membrane. It functions in the pathway cofactor biosynthesis; ubiquinone biosynthesis [regulation]. Its function is as follows. Is probably a protein kinase regulator of UbiI activity which is involved in aerobic coenzyme Q (ubiquinone) biosynthesis. The chain is Probable protein kinase UbiB from Xylella fastidiosa (strain 9a5c).